We begin with the raw amino-acid sequence, 932 residues long: MRRIEIVLGELERLTRGLCLADLAQETAFTAEAIGFNLGLARNSVSKDLNQLWNDGLAIKSRGRPVYFLHRQALETLLGRQLEESEREVRSVADVLPHEEHYAPDDPFTSLIGYDRSLRDAVEKGRAAVLYPHGLHVLLTGPSGVGKTFFAELMHRFACEQASGAIPPLVYFNCAEYAHNPELLSSHLFGHRQGAFTGANEHKTGLVEQADGGYLLLDEVHRLSYEGQEKLFSILDKGEYRPLGVSSQPRSISVRLICATTEPVGSALLRTFQRRIQVCIDLPGIHQRSVEEQIELIVGFLQRESRKIERTVSIDKPLLLWLLNKPLEGNIGQLKSDIQFLCAQAWASGMTEHNDTLQLDKRLAEMSVNPTPEQRLLVDTLFEGKARLNIDARTLPALKTSLATGAEIEESDLFYSFLTREYVNLRNSNVPPAETLAILKNKLSSIFEYGLYSRDSVAHPPRYGDQIEERVTLLIGCVEQVLGFSLPENLVNPLRKHFLALIGYVQRGLIPQLYSSSLILDRCKDEYDNATLLCRKINELLHIQCPATEVVWLCLFLKECRHYRQRIDASPDCGVILIAHGATTATSQAQYVNRVLERELFSAIDMPFEQSVHDTLETLTQMIQTRQYRRLILLVDIGSLIHFGSTISKLFQIDVLLMPNITLTSLLEVGLDLSYETSDLPQLTALLQSKNIPCQLCTPQQENGGKVLVISCITGMGTAEKIKKVLEESFGELMSQDTRMVILDYNEVRSLERVQQALNASERLAGIVGTFQPGLPDIPFISLEELFSEQGPELVLSLLTPDLSNAERRLEMERSAMRFISALTMESIINHISVLNPQRILKEMEGVFNHLTSSLSLKPSRQVTLRFLIHCCCMVERIVINRKPLQMALESQPNLDARAFSVIKSAFLPIEDAYAIRLSDAEYFYIYELLYS.

Residues 111–343 (LIGYDRSLRD…LKSDIQFLCA (233 aa)) enclose the Sigma-54 factor interaction domain. Residues 141 to 148 (GPSGVGKT) and 210 to 219 (ADGGYLLLDE) contribute to the ATP site. Positions 462-567 (RYGDQIEERV…KECRHYRQRI (106 aa)) constitute a PRD 1 domain. At histidine 497 the chain carries Phosphohistidine. The 137-residue stretch at 572 to 708 (DCGVILIAHG…PQQENGGKVL (137 aa)) folds into the PTS EIIA type-4 domain. Histidine 580 (tele-phosphohistidine intermediate) is an active-site residue. Positions 835–932 (LNPQRILKEM…YFYIYELLYS (98 aa)) constitute a PRD 2 domain. Histidine 870 is modified (phosphohistidine).

In terms of biological role, involved in the regulation of the catabolism of D-glucosaminate. The polypeptide is Transcriptional regulatory protein DagR (dgaR) (Salmonella typhimurium (strain 14028s / SGSC 2262)).